Reading from the N-terminus, the 729-residue chain is Fatty acid oxidation complex subunit alpha (729 aa).

Positions 1 to 189 (MLYKGDTLYL…KIGLVDGVVK (189 aa)) are enoyl-CoA hydratase/isomerase. Substrate is bound at residue aspartate 296. Residues 311–729 (ETPKQAAVLG…ARPVGDLKTA (419 aa)) are 3-hydroxyacyl-CoA dehydrogenase. Residues methionine 324, aspartate 343, 400-402 (VVE), lysine 407, and serine 429 each bind NAD(+). Histidine 450 serves as the catalytic For 3-hydroxyacyl-CoA dehydrogenase activity. Asparagine 453 contributes to the NAD(+) binding site. Substrate-binding residues include asparagine 500 and tyrosine 660. The interval 708-729 (RHNEPYYPPVEPARPVGDLKTA) is disordered.

This sequence in the N-terminal section; belongs to the enoyl-CoA hydratase/isomerase family. The protein in the C-terminal section; belongs to the 3-hydroxyacyl-CoA dehydrogenase family. As to quaternary structure, heterotetramer of two alpha chains (FadB) and two beta chains (FadA).

It catalyses the reaction a (3S)-3-hydroxyacyl-CoA + NAD(+) = a 3-oxoacyl-CoA + NADH + H(+). The catalysed reaction is a (3S)-3-hydroxyacyl-CoA = a (2E)-enoyl-CoA + H2O. It carries out the reaction a 4-saturated-(3S)-3-hydroxyacyl-CoA = a (3E)-enoyl-CoA + H2O. The enzyme catalyses (3S)-3-hydroxybutanoyl-CoA = (3R)-3-hydroxybutanoyl-CoA. It catalyses the reaction a (3Z)-enoyl-CoA = a 4-saturated (2E)-enoyl-CoA. The catalysed reaction is a (3E)-enoyl-CoA = a 4-saturated (2E)-enoyl-CoA. It participates in lipid metabolism; fatty acid beta-oxidation. Involved in the aerobic and anaerobic degradation of long-chain fatty acids via beta-oxidation cycle. Catalyzes the formation of 3-oxoacyl-CoA from enoyl-CoA via L-3-hydroxyacyl-CoA. It can also use D-3-hydroxyacyl-CoA and cis-3-enoyl-CoA as substrate. The sequence is that of Fatty acid oxidation complex subunit alpha from Escherichia coli O81 (strain ED1a).